A 262-amino-acid chain; its full sequence is Transcription factor Spi-B (262 aa).

The segment at 1–31 is TAD1 (Acidic); the sequence is MLALEAAQLDGPHFSCLYPDGVFYDLDSCKH. The tract at residues 41–61 is TAD2; the sequence is PDSLWDWTVAPPVPATPYEAF. The disordered stretch occupies residues 140 to 163; the sequence is ALEVSDSESDEALVAGPEGKGSEA. Residues 169–252 constitute a DNA-binding region (ETS); sequence LRLYQFLLGL…VKRKLTYQFD (84 aa).

It belongs to the ETS family. Can form homotypic interactions. Interacts with IRF4/Pip. Interacts with JUN. Interacts with TBP. May also interact with CREBBP and EP300. Interacts with NONO/p54(nrb). As to expression, expressed in plasmacytoid dendritic cells (pDCs) and B-cells, not expressed in T-cells or granulocytes. May also be enriched in stem cell populations of the liver.

The protein localises to the nucleus. It is found in the cytoplasm. In terms of biological role, sequence specific transcriptional activator which binds to the PU-box, a purine-rich DNA sequence (5'-GAGGAA-3') that can act as a lymphoid-specific enhancer. Promotes development of plasmacytoid dendritic cells (pDCs), also known as type 2 DC precursors (pre-DC2) or natural interferon (IFN)-producing cells. These cells have the capacity to produce large amounts of interferon and block viral replication. May be required for B-cell receptor (BCR) signaling, which is necessary for normal B-cell development and antigenic stimulation. The chain is Transcription factor Spi-B (SPIB) from Homo sapiens (Human).